Here is a 144-residue protein sequence, read N- to C-terminus: Large ribosomal subunit protein uL15 (144 aa).

Positions 1-57 are disordered; sequence MQLNDLRSAPGARREKHRPGRGIGSGLGKTGGRGHKGLTSRSGGKVAPGFEGGQQPL. Positions 21-31 are enriched in gly residues; that stretch reads RGIGSGLGKTG.

Belongs to the universal ribosomal protein uL15 family. Part of the 50S ribosomal subunit.

Functionally, binds to the 23S rRNA. In Pseudomonas aeruginosa (strain LESB58), this protein is Large ribosomal subunit protein uL15.